The following is a 288-amino-acid chain: Proteasome subunit beta (288 aa).

A propeptide spans 1–60 (removed in mature form; by autocatalysis); the sequence is MESNADWGSRGGLPQAFLTPGISSFSEFLKGFAPEYLPSGRPLPGGLGSASAAGDIAPHG. Residue Thr61 is the Nucleophile of the active site.

This sequence belongs to the peptidase T1B family. The 20S proteasome core is composed of 14 alpha and 14 beta subunits that assemble into four stacked heptameric rings, resulting in a barrel-shaped structure. The two inner rings, each composed of seven catalytic beta subunits, are sandwiched by two outer rings, each composed of seven alpha subunits. The catalytic chamber with the active sites is on the inside of the barrel. Has a gated structure, the ends of the cylinder being occluded by the N-termini of the alpha-subunits. Is capped by the proteasome-associated ATPase, ARC.

The protein resides in the cytoplasm. It carries out the reaction Cleavage of peptide bonds with very broad specificity.. It participates in protein degradation; proteasomal Pup-dependent pathway. The formation of the proteasomal ATPase ARC-20S proteasome complex, likely via the docking of the C-termini of ARC into the intersubunit pockets in the alpha-rings, may trigger opening of the gate for substrate entry. Interconversion between the open-gate and close-gate conformations leads to a dynamic regulation of the 20S proteasome proteolysis activity. Its function is as follows. Component of the proteasome core, a large protease complex with broad specificity involved in protein degradation. The protein is Proteasome subunit beta of Catenulispora acidiphila (strain DSM 44928 / JCM 14897 / NBRC 102108 / NRRL B-24433 / ID139908).